A 372-amino-acid chain; its full sequence is THAP domain-containing protein 5 (372 aa).

The THAP-type zinc-finger motif lies at 1-85 (MTRYCAATRC…LKPNAIPTLF (85 aa)). Positions 306–362 (TDRHYLRQKIAKLQSKIAVLEAQENATLSRLRLLESVIAKLKQENLLSDEKLKILEN) form a coiled coil.

It is found in the nucleus. In Xenopus laevis (African clawed frog), this protein is THAP domain-containing protein 5 (thap5).